The following is a 339-amino-acid chain: Ornithine carbamoyltransferase, catabolic (339 aa).

Carbamoyl phosphate contacts are provided by residues 57–60 (STRT), Gln-84, Arg-108, and 135–138 (HPTQ). Residues Asn-167, Asp-231, and 235–236 (SM) each bind L-ornithine. Residues 274 to 275 (CL) and Arg-319 contribute to the carbamoyl phosphate site.

The protein belongs to the aspartate/ornithine carbamoyltransferase superfamily. OTCase family.

It is found in the cytoplasm. It catalyses the reaction carbamoyl phosphate + L-ornithine = L-citrulline + phosphate + H(+). It participates in amino-acid degradation; L-arginine degradation via ADI pathway; carbamoyl phosphate from L-arginine: step 2/2. Reversibly catalyzes the transfer of the carbamoyl group from carbamoyl phosphate (CP) to the N(epsilon) atom of ornithine (ORN) to produce L-citrulline. This is Ornithine carbamoyltransferase, catabolic (arcB) from Enterococcus faecalis (strain ATCC 700802 / V583).